The following is a 71-amino-acid chain: Omega-conotoxin-like Ac6.4 (71 aa).

The first 22 residues, 1–22 (MKLTCVVIVAVLLLTACQLLTA), serve as a signal peptide directing secretion. Positions 23–45 (DDSRGTQKHRALRSDTKLSMSTR) are excised as a propeptide. 3 disulfides stabilise this stretch: C46–C61, C53–C65, and C60–C70. The residue at position 70 (C70) is a Cysteine amide.

It belongs to the conotoxin O1 superfamily. Expressed by the venom duct.

It localises to the secreted. Its function is as follows. Omega-conotoxins act at presynaptic membranes, they bind and block voltage-gated calcium channels (Cav). The sequence is that of Omega-conotoxin-like Ac6.4 from Conus achatinus (Little frog cone).